A 587-amino-acid polypeptide reads, in one-letter code: APOBEC1 complementation factor (587 aa).

3 consecutive RRM domains span residues 56-134 (CEIF…ASVD), 136-218 (CRLF…WAEP), and 231-303 (KILY…LAKP). The interval 360 to 409 (HFPATKGHLSNRAIIRAPSVRGAAGVRGLGGRGYLAYTGLGRGYQVKGDK) is required for nuclear localization. At Thr-491 the chain carries Phosphothreonine.

As to quaternary structure, part of the apolipoprotein B mRNA editing complex with APOBEC1. Interacts with TNPO2; TNPO2 may be responsible for transport of A1CF into the nucleus. Interacts with SYNCRIP. Interacts with CELF2/CUGBP2. Interacts with RBM47.

It is found in the nucleus. The protein localises to the endoplasmic reticulum. It localises to the cytoplasm. In terms of biological role, essential component of the apolipoprotein B mRNA editing enzyme complex which is responsible for the postranscriptional editing of a CAA codon for Gln to a UAA codon for stop in APOB mRNA. Binds to APOB mRNA and is probably responsible for docking the catalytic subunit, APOBEC1, to the mRNA to allow it to deaminate its target cytosine. The complex also seems to protect the edited APOB mRNA from nonsense-mediated decay. This chain is APOBEC1 complementation factor (A1CF), found in Pongo abelii (Sumatran orangutan).